The sequence spans 228 residues: Phosphoglycolate phosphatase (228 aa).

Aspartate 9 serves as the catalytic Nucleophile. Positions 9 and 11 each coordinate Mg(2+). Residue lysine 151 participates in substrate binding. Aspartate 174 and aspartate 178 together coordinate Mg(2+).

The protein belongs to the archaeal SPP-like hydrolase family. Mg(2+) serves as cofactor.

The catalysed reaction is 2-phosphoglycolate + H2O = glycolate + phosphate. Its function is as follows. Catalyzes the dephosphorylation of 2-phosphoglycolate. The sequence is that of Phosphoglycolate phosphatase from Pyrobaculum neutrophilum (strain DSM 2338 / JCM 9278 / NBRC 100436 / V24Sta) (Thermoproteus neutrophilus).